The sequence spans 450 residues: Bifunctional protein GlmU (450 aa).

The tract at residues M1 to R229 is pyrophosphorylase. Residues L8–G11, K22, Q72, and G77–T78 each bind UDP-N-acetyl-alpha-D-glucosamine. Residue D102 participates in Mg(2+) binding. 3 residues coordinate UDP-N-acetyl-alpha-D-glucosamine: G139, E154, and N227. A Mg(2+)-binding site is contributed by N227. The linker stretch occupies residues V230–N250. The interval G251–K450 is N-acetyltransferase. UDP-N-acetyl-alpha-D-glucosamine contacts are provided by R332 and K350. H362 (proton acceptor) is an active-site residue. UDP-N-acetyl-alpha-D-glucosamine-binding residues include Y365 and N376. Acetyl-CoA-binding positions include N385–Y386, A422, and R439.

This sequence in the N-terminal section; belongs to the N-acetylglucosamine-1-phosphate uridyltransferase family. It in the C-terminal section; belongs to the transferase hexapeptide repeat family. In terms of assembly, homotrimer. It depends on Mg(2+) as a cofactor.

It is found in the cytoplasm. It carries out the reaction alpha-D-glucosamine 1-phosphate + acetyl-CoA = N-acetyl-alpha-D-glucosamine 1-phosphate + CoA + H(+). The enzyme catalyses N-acetyl-alpha-D-glucosamine 1-phosphate + UTP + H(+) = UDP-N-acetyl-alpha-D-glucosamine + diphosphate. Its pathway is nucleotide-sugar biosynthesis; UDP-N-acetyl-alpha-D-glucosamine biosynthesis; N-acetyl-alpha-D-glucosamine 1-phosphate from alpha-D-glucosamine 6-phosphate (route II): step 2/2. It participates in nucleotide-sugar biosynthesis; UDP-N-acetyl-alpha-D-glucosamine biosynthesis; UDP-N-acetyl-alpha-D-glucosamine from N-acetyl-alpha-D-glucosamine 1-phosphate: step 1/1. The protein operates within bacterial outer membrane biogenesis; LPS lipid A biosynthesis. In terms of biological role, catalyzes the last two sequential reactions in the de novo biosynthetic pathway for UDP-N-acetylglucosamine (UDP-GlcNAc). The C-terminal domain catalyzes the transfer of acetyl group from acetyl coenzyme A to glucosamine-1-phosphate (GlcN-1-P) to produce N-acetylglucosamine-1-phosphate (GlcNAc-1-P), which is converted into UDP-GlcNAc by the transfer of uridine 5-monophosphate (from uridine 5-triphosphate), a reaction catalyzed by the N-terminal domain. This Staphylococcus aureus (strain MRSA252) protein is Bifunctional protein GlmU.